A 152-amino-acid polypeptide reads, in one-letter code: MARMHARRRGKSSSVRPARNEAPAWSNTDKAAIEKLIVDLRKEGTSASMIGLVLRDRYGVPDVKMVTGKSIGDILTENKVSSEIPEDLRDLMVKALGLRKHLGENPKDLHNKRQLHLVEAKIRRLVKYYIGTRKLPAGFTYKPENAEILLSR.

The segment covering 1 to 11 has biased composition (basic residues); it reads MARMHARRRGK. The interval 1–25 is disordered; the sequence is MARMHARRRGKSSSVRPARNEAPAW.

Belongs to the universal ribosomal protein uS15 family. As to quaternary structure, part of the 30S ribosomal subunit.

The polypeptide is Small ribosomal subunit protein uS15 (Methanoregula boonei (strain DSM 21154 / JCM 14090 / 6A8)).